We begin with the raw amino-acid sequence, 319 residues long: Ribose-phosphate pyrophosphokinase (319 aa).

ATP is bound by residues Asp40–Glu42 and Arg99–Gln100. The Mg(2+) site is built by His134 and Asp174. Lys198 is an active-site residue. D-ribose 5-phosphate-binding positions include Arg200, Asp224, and Asp228–Thr232.

The protein belongs to the ribose-phosphate pyrophosphokinase family. Class I subfamily. In terms of assembly, homohexamer. Requires Mg(2+) as cofactor.

The protein resides in the cytoplasm. It catalyses the reaction D-ribose 5-phosphate + ATP = 5-phospho-alpha-D-ribose 1-diphosphate + AMP + H(+). It participates in metabolic intermediate biosynthesis; 5-phospho-alpha-D-ribose 1-diphosphate biosynthesis; 5-phospho-alpha-D-ribose 1-diphosphate from D-ribose 5-phosphate (route I): step 1/1. Involved in the biosynthesis of the central metabolite phospho-alpha-D-ribosyl-1-pyrophosphate (PRPP) via the transfer of pyrophosphoryl group from ATP to 1-hydroxyl of ribose-5-phosphate (Rib-5-P). This Coxiella burnetii (strain RSA 493 / Nine Mile phase I) protein is Ribose-phosphate pyrophosphokinase.